Reading from the N-terminus, the 378-residue chain is Fetuin-B (378 aa).

The first 18 residues, 1 to 18 (MGVLRLLVLCTLAACCVA), serve as a signal peptide directing secretion. 2 Cystatin fetuin-B-type domains span residues 28–141 (NAPF…YNCT) and 152–261 (SMCP…VSCE). N-linked (GlcNAc...) asparagine glycosylation occurs at Asn-40. Intrachain disulfides connect Cys-96–Cys-107, Cys-120–Cys-140, Cys-154–Cys-157, Cys-217–Cys-224, and Cys-237–Cys-260. Asn-139 carries an N-linked (GlcNAc...) asparagine glycan. 2 disordered regions span residues 266–338 (QDQV…PQGD) and 357–378 (LPFP…QRTP). The segment covering 286-297 (QKNTAPTSSPSI) has biased composition (polar residues). O-linked (GalNAc...) threonine glycosylation is found at Thr-289 and Thr-292. The residue at position 316 (Ser-316) is a Phosphoserine. Positions 362 to 378 (KEQRSPECPGPEKQRTP) are enriched in basic and acidic residues.

Belongs to the fetuin family. In terms of tissue distribution, liver.

It is found in the secreted. Functionally, protease inhibitor required for egg fertilization. Required to prevent premature zona pellucida hardening before fertilization, probably by inhibiting the protease activity of ASTL, a protease that mediates the cleavage of ZP2 and triggers zona pellucida hardening. This chain is Fetuin-B (Fetub), found in Rattus norvegicus (Rat).